The sequence spans 938 residues: Probable glutamyl endopeptidase, chloroplastic (938 aa).

The transit peptide at 1–54 (MSSLTILLQRACLRFALLPVPPLRAPLRPPRRPLGLPRRSAMSSSAASRLSHIV) directs the protein to the chloroplast. Residues 58 to 76 (GGAAGESSEPPAAAAAASG) are compositionally biased toward low complexity. The disordered stretch occupies residues 58-77 (GGAAGESSEPPAAAAAASGL). Catalysis depends on charge relay system residues S762, D836, and H870. Over residues 897–913 (SSKTDSDSVADTENKTV) the composition is skewed to polar residues. Residues 897 to 938 (SSKTDSDSVADTENKTVSASGGGAPCEGPEAEGFSSMQRSLL) form a disordered region.

The protein belongs to the peptidase S9D family.

Its subcellular location is the plastid. The protein localises to the chloroplast stroma. Serine-type protease active in vitro against the LHCII N-terminal. Cleaves its substrate on the carboxy-side of Glu residues. In Oryza sativa subsp. japonica (Rice), this protein is Probable glutamyl endopeptidase, chloroplastic (GEP).